Consider the following 1134-residue polypeptide: Phytochrome 1 (1134 aa).

A GAF domain is found at 219 to 401 (DIGLLCDTVV…VFGLQLNMEA (183 aa)). Cys-324 is a phytochromobilin binding site. Positions 616–687 (VANEMVRLIE…RLLYLALQGD (72 aa)) constitute a PAS 1 domain. The region spanning 690 to 746 (QNVELKLKTFGGQKDKEAVILVVNACASRDVSDNVVGVCFVGQDVTGQKVVMDKFTR) is the PAC domain. One can recognise a PAS 2 domain in the interval 750-821 (DYKAIVQNPN…KGQDAVTKFM (72 aa)). Positions 901-1121 (YIRQEIKNPL…LVSLELPLAQ (221 aa)) constitute a Histidine kinase domain.

It belongs to the phytochrome family. Homodimer. In terms of processing, contains one covalently linked phytochromobilin chromophore.

Functionally, regulatory photoreceptor which exists in two forms that are reversibly interconvertible by light: the Pr form that absorbs maximally in the red region of the spectrum and the Pfr form that absorbs maximally in the far-red region. Photoconversion of Pr to Pfr induces an array of morphogenic responses, whereas reconversion of Pfr to Pr cancels the induction of those responses. Pfr controls the expression of a number of nuclear genes including those encoding the small subunit of ribulose-bisphosphate carboxylase, chlorophyll A/B binding protein, protochlorophyllide reductase, rRNA, etc. It also controls the expression of its own gene(s) in a negative feedback fashion. The protein is Phytochrome 1 (PHY1) of Selaginella martensii (Martens's spike moss).